The following is an 87-amino-acid chain: uncharacterized protein (87 aa).

The signal sequence occupies residues 1-19; that stretch reads MLVLLVAVLVTAVYAFVHA. The chain crosses the membrane as a helical span at residues 39–59; sequence LVILGAAVALASILYPVLGVL.

It to M.leprae ML2453.

It is found in the membrane. This is an uncharacterized protein from Mycobacterium bovis (strain ATCC BAA-935 / AF2122/97).